A 296-amino-acid polypeptide reads, in one-letter code: Protoheme IX farnesyltransferase (296 aa).

9 helical membrane passes run valine 9–alanine 29, tyrosine 36–phenylalanine 56, alanine 84–glycine 104, leucine 108–methionine 128, valine 133–alanine 153, leucine 163–phenylalanine 183, isoleucine 209–alanine 229, leucine 234–valine 254, and phenylalanine 265–valine 285.

The protein belongs to the UbiA prenyltransferase family. Protoheme IX farnesyltransferase subfamily.

The protein localises to the cell inner membrane. The enzyme catalyses heme b + (2E,6E)-farnesyl diphosphate + H2O = Fe(II)-heme o + diphosphate. Its pathway is porphyrin-containing compound metabolism; heme O biosynthesis; heme O from protoheme: step 1/1. In terms of biological role, converts heme B (protoheme IX) to heme O by substitution of the vinyl group on carbon 2 of heme B porphyrin ring with a hydroxyethyl farnesyl side group. This is Protoheme IX farnesyltransferase from Citrobacter koseri (strain ATCC BAA-895 / CDC 4225-83 / SGSC4696).